The following is a 372-amino-acid chain: GRASP65 homolog protein 1 (372 aa).

Met1 is modified (N-acetylmethionine). PDZ GRASP-type domains lie at 66–183 (SGLR…WTPL) and 188–276 (FTYH…YGFL). Positions 66-292 (SGLRIVWVDE…KHCPQQAQQQ (227 aa)) are GRASP. Ser155 is subject to Phosphoserine. The interval 312–372 (VPSAFTAPPV…PPPQKQSSSD (61 aa)) is disordered.

In terms of assembly, homodimer. Interacts with BUG1 (via C-terminus), probably forming a heterooligomer consisting of a GRH1 dimer and a BUG1 dimer. Interacts with COPII coat components SEC23, SEC24, SFB2 and SFB3. In terms of processing, N-terminal acetylation; by N-terminal acetyltransferase NatC.

It is found in the cytoplasm. The protein resides in the golgi apparatus. It localises to the cis-Golgi network membrane. Its function is as follows. Involved in the spindle assembly checkpoint. Involved in ER to Golgi vesicle-mediated transport by either facilitating USO1-dependent and -independent tethering or increasing target accuracy of fusion events of COPII-coated vesicles. This chain is GRASP65 homolog protein 1 (GRH1), found in Saccharomyces cerevisiae (strain ATCC 204508 / S288c) (Baker's yeast).